Here is a 258-residue protein sequence, read N- to C-terminus: Thiamine thiazole synthase (258 aa).

NAD(+)-binding positions include serine 36, glutamate 55 to arginine 56, glycine 63, valine 127, and histidine 153 to aspartate 155. Fe cation contacts are provided by aspartate 155 and histidine 170. Residue methionine 224 participates in NAD(+) binding. Residue arginine 234 coordinates glycine.

It belongs to the THI4 family. As to quaternary structure, homooctamer; tetramer of dimers. Fe(2+) serves as cofactor.

It carries out the reaction hydrogen sulfide + glycine + NAD(+) = ADP-5-ethyl-4-methylthiazole-2-carboxylate + nicotinamide + 3 H2O + H(+). It participates in cofactor biosynthesis; thiamine diphosphate biosynthesis. Involved in the biosynthesis of the thiazole moiety of thiamine. Catalyzes the conversion of NAD and glycine to adenosine diphosphate 5-(2-hydroxyethyl)-4-methylthiazole-2-carboxylate (ADT), an adenylated thiazole intermediate, using free sulfide as a source of sulfur. This Desulfosudis oleivorans (strain DSM 6200 / JCM 39069 / Hxd3) (Desulfococcus oleovorans) protein is Thiamine thiazole synthase.